The sequence spans 448 residues: Bifunctional protein GlmU (448 aa).

The segment at 1–229 is pyrophosphorylase; it reads MNNHTLNIII…NDEIQGINNL (229 aa). Residues 11 to 14, lysine 25, glutamine 76, 81 to 82, 103 to 105, glycine 140, glutamate 154, asparagine 169, and asparagine 227 each bind UDP-N-acetyl-alpha-D-glucosamine; these read LAAG, GT, and YGD. Aspartate 105 contributes to the Mg(2+) binding site. Residue asparagine 227 coordinates Mg(2+). Positions 230–250 are linker; it reads LQLVRAEKIYQKQQAKLLLLS. The N-acetyltransferase stretch occupies residues 251–448; that stretch reads GIMIYNPSNF…NEKKQIHKKL (198 aa). Lysine 351 provides a ligand contact to UDP-N-acetyl-alpha-D-glucosamine. The Proton acceptor role is filled by histidine 363. UDP-N-acetyl-alpha-D-glucosamine is bound by residues tyrosine 366 and asparagine 377. Acetyl-CoA contacts are provided by residues alanine 380, 386-387, serine 405, and alanine 423; that span reads NY.

It in the N-terminal section; belongs to the N-acetylglucosamine-1-phosphate uridyltransferase family. This sequence in the C-terminal section; belongs to the transferase hexapeptide repeat family. Homotrimer. Mg(2+) serves as cofactor.

It is found in the cytoplasm. It carries out the reaction alpha-D-glucosamine 1-phosphate + acetyl-CoA = N-acetyl-alpha-D-glucosamine 1-phosphate + CoA + H(+). It catalyses the reaction N-acetyl-alpha-D-glucosamine 1-phosphate + UTP + H(+) = UDP-N-acetyl-alpha-D-glucosamine + diphosphate. The protein operates within nucleotide-sugar biosynthesis; UDP-N-acetyl-alpha-D-glucosamine biosynthesis; N-acetyl-alpha-D-glucosamine 1-phosphate from alpha-D-glucosamine 6-phosphate (route II): step 2/2. It participates in nucleotide-sugar biosynthesis; UDP-N-acetyl-alpha-D-glucosamine biosynthesis; UDP-N-acetyl-alpha-D-glucosamine from N-acetyl-alpha-D-glucosamine 1-phosphate: step 1/1. Its pathway is bacterial outer membrane biogenesis; LPS lipid A biosynthesis. Its function is as follows. Catalyzes the last two sequential reactions in the de novo biosynthetic pathway for UDP-N-acetylglucosamine (UDP-GlcNAc). The C-terminal domain catalyzes the transfer of acetyl group from acetyl coenzyme A to glucosamine-1-phosphate (GlcN-1-P) to produce N-acetylglucosamine-1-phosphate (GlcNAc-1-P), which is converted into UDP-GlcNAc by the transfer of uridine 5-monophosphate (from uridine 5-triphosphate), a reaction catalyzed by the N-terminal domain. The sequence is that of Bifunctional protein GlmU from Buchnera aphidicola subsp. Baizongia pistaciae (strain Bp).